Here is a 285-residue protein sequence, read N- to C-terminus: Pantothenate synthetase (285 aa).

Residue 32-39 participates in ATP binding; sequence MGALHDGH. His-39 acts as the Proton donor in catalysis. (R)-pantoate is bound at residue Gln-63. Gln-63 serves as a coordination point for beta-alanine. Residue 149-152 coordinates ATP; it reads GEKD. Gln-155 serves as a coordination point for (R)-pantoate. ATP is bound by residues Val-178 and 186-189; that span reads MSSR.

This sequence belongs to the pantothenate synthetase family. As to quaternary structure, homodimer.

Its subcellular location is the cytoplasm. The enzyme catalyses (R)-pantoate + beta-alanine + ATP = (R)-pantothenate + AMP + diphosphate + H(+). The protein operates within cofactor biosynthesis; (R)-pantothenate biosynthesis; (R)-pantothenate from (R)-pantoate and beta-alanine: step 1/1. Its function is as follows. Catalyzes the condensation of pantoate with beta-alanine in an ATP-dependent reaction via a pantoyl-adenylate intermediate. This chain is Pantothenate synthetase, found in Ruegeria pomeroyi (strain ATCC 700808 / DSM 15171 / DSS-3) (Silicibacter pomeroyi).